Here is a 772-residue protein sequence, read N- to C-terminus: Ion-translocating oxidoreductase complex subunit C (772 aa).

2 4Fe-4S ferredoxin-type domains span residues 369 to 397 (GEPQ…QQLY) and 407 to 436 (KATT…VQYF). 8 residues coordinate [4Fe-4S] cluster: C377, C380, C383, C387, C416, C419, C422, and C426. Disordered stretches follow at residues 602–684 (KLEQ…DPRK), 696–717 (ARKL…PRKA), and 727–746 (KARK…QVDP). Residues 605-615 (QQQANAEPEQQ) show a composition bias toward low complexity.

Belongs to the 4Fe4S bacterial-type ferredoxin family. RnfC subfamily. In terms of assembly, the complex is composed of six subunits: RsxA, RsxB, RsxC, RsxD, RsxE and RsxG. The cofactor is [4Fe-4S] cluster.

It localises to the cell inner membrane. Its function is as follows. Part of a membrane-bound complex that couples electron transfer with translocation of ions across the membrane. Required to maintain the reduced state of SoxR. This chain is Ion-translocating oxidoreductase complex subunit C, found in Escherichia coli O157:H7 (strain EC4115 / EHEC).